A 1709-amino-acid chain; its full sequence is Sialoadhesin (1709 aa).

A signal peptide spans 1-19 (MGFLPKLLLLASFFPAGQA). One can recognise an Ig-like V-type domain in the interval 20-136 (SWGVSSPQDV…DVKGTLVTVT (117 aa)). Residues 20–1641 (SWGVSSPQDV…ALHRLHQFQQ (1622 aa)) are Extracellular-facing. Disulfide bonds link cysteine 36-cysteine 166, cysteine 41-cysteine 98, cysteine 160-cysteine 217, and cysteine 262-cysteine 305. Residues tyrosine 63, arginine 116, and 122 to 126 (VNRWS) each bind N-acetylneuraminate. 12 consecutive Ig-like C2-type domains span residues 139 to 233 (PRVP…IHLQ), 238 to 320 (PKGV…PPIS), 326 to 405 (AEVQ…GPVS), 411 to 507 (PPLT…LDFH), 511 to 593 (ARLL…AVLT), 601 to 705 (PTFT…ATFN), 708 to 785 (ATVL…AQLS), 799 to 894 (PKLS…FQVR), 898 to 977 (VQVS…APIS), 984 to 1083 (PRHV…ADFD), 1085 to 1165 (QAVN…RPIT), and 1176 to 1248 (RLTY…SPLG). Asparagine 159 carries N-linked (GlcNAc...) asparagine glycosylation. Residues asparagine 265 and asparagine 339 are each glycosylated (N-linked (GlcNAc...) asparagine). 2 disulfide bridges follow: cysteine 346/cysteine 390 and cysteine 433/cysteine 491. N-linked (GlcNAc...) asparagine glycosylation is present at asparagine 499. 2 disulfide bridges follow: cysteine 531–cysteine 575 and cysteine 624–cysteine 689. Residues asparagine 697, asparagine 726, asparagine 730, and asparagine 741 are each glycosylated (N-linked (GlcNAc...) asparagine). Intrachain disulfides connect cysteine 729/cysteine 774 and cysteine 817/cysteine 876. The N-linked (GlcNAc...) asparagine glycan is linked to asparagine 886. 2 disulfide bridges follow: cysteine 916/cysteine 960 and cysteine 1005/cysteine 1067. N-linked (GlcNAc...) asparagine glycans are attached at residues asparagine 1104 and asparagine 1138. 2 disulfides stabilise this stretch: cysteine 1107-cysteine 1149 and cysteine 1193-cysteine 1241. N-linked (GlcNAc...) asparagine glycosylation occurs at asparagine 1251. Ig-like C2-type domains are found at residues 1259–1341 (EGVR…AALQ), 1350–1442 (VLSS…RLQV), 1445–1528 (ARVV…VMLR), and 1536–1631 (PTMM…FGVR). Disulfide bonds link cysteine 1281–cysteine 1324 and cysteine 1367–cysteine 1425. Residues asparagine 1462 and asparagine 1476 are each glycosylated (N-linked (GlcNAc...) asparagine). 2 disulfide bridges follow: cysteine 1465-cysteine 1511 and cysteine 1554-cysteine 1613. The helical transmembrane segment at 1642-1662 (LLWVLGLLVGLLLLLLGLGAC) threads the bilayer. Residues 1663–1709 (YTWRRRRVCKQSMGENSVEMAFQKETTQLIDPDAATCETSTCAPPLG) are Cytoplasmic-facing.

The protein belongs to the immunoglobulin superfamily. SIGLEC (sialic acid binding Ig-like lectin) family. Interacts with TYROBP. Interacts with CLEC10A. Expressed by macrophages in various tissues. High levels are found in spleen, lymph node, perivascular macrophages in brain and lower levels in bone marrow, liver Kupffer cells and lamina propria of colon and lung. Also expressed by inflammatory macrophages in rheumatoid arthritis.

It is found in the cell membrane. The protein resides in the secreted. Macrophage-restricted adhesion molecule that mediates sialic-acid dependent binding to lymphocytes, including granulocytes, monocytes, natural killer cells, B-cells and CD8 T-cells. Plays a crucial role in limiting bacterial dissemination by engaging sialylated bacteria to promote effective phagocytosis and antigen presentation for the adaptive immune response. Mediates the uptake of various enveloped viruses via sialic acid recognition and subsequently induces the formation of intracellular compartments filled with virions (VCCs). In turn, enhances macrophage-to-T-cell transmission of several viruses including HIV-1 or SARS-CoV-2. Acts as an endocytic receptor mediating clathrin dependent endocytosis. Preferentially binds to alpha-2,3-linked sialic acid. Binds to SPN/CD43 on T-cells. May play a role in hemopoiesis. Plays a role in the inhibition of antiviral innate immune by promoting TBK1 degradation via TYROBP and TRIM27-mediated ubiquitination. In terms of biological role, (Microbial infection) Facilitates viral cytoplasmic entry into activated dendritic cells via recognition of sialylated gangliosides pesent on viral membrane. This Homo sapiens (Human) protein is Sialoadhesin (SIGLEC1).